The chain runs to 77 residues: Protein IDA (77 aa).

Residues 1–26 form the signal peptide; the sequence is MAPCRTMMVLLCFVLFLAASSSCVAA. An RLK5-binding region spans residues 56-69; it reads GVPIPPSAPSKRHN.

As to quaternary structure, interaction with RLK5. In terms of tissue distribution, expressed specifically in the floral abscission zone.

Its subcellular location is the secreted. It localises to the extracellular space. Functionally, involved in an ethylene-independent separation step of floral abscission. Promotes abscission zone (AZ) cells rounding. May act with RLK5 and HSL2 as ligand-receptor pairs. The polypeptide is Protein IDA (Arabidopsis thaliana (Mouse-ear cress)).